A 181-amino-acid polypeptide reads, in one-letter code: Oligoribonuclease (181 aa).

In terms of domain architecture, Exonuclease spans 8-171 (LIWIDLEMTG…DDIRESVAEL (164 aa)). Residue Tyr-129 is part of the active site.

This sequence belongs to the oligoribonuclease family.

It localises to the cytoplasm. In terms of biological role, 3'-to-5' exoribonuclease specific for small oligoribonucleotides. The sequence is that of Oligoribonuclease from Yersinia pseudotuberculosis serotype O:1b (strain IP 31758).